The chain runs to 342 residues: Holliday junction branch migration complex subunit RuvB (342 aa).

The interval 1–181 is large ATPase domain (RuvB-L); it reads MEERFLTPKD…FGMVLELEFY (181 aa). ATP contacts are provided by residues leucine 20, arginine 21, glycine 62, lysine 65, threonine 66, threonine 67, 128 to 130, arginine 171, tyrosine 181, and arginine 218; that span reads EDF. Residue threonine 66 participates in Mg(2+) binding. A small ATPAse domain (RuvB-S) region spans residues 182–252; sequence TPDELKQIIK…TVEDAMKIMG (71 aa). Residues 255-342 form a head domain (RuvB-H) region; it reads AEGLDDMDRK…IGPLWDSTGD (88 aa). DNA-binding residues include arginine 310 and arginine 315.

This sequence belongs to the RuvB family. In terms of assembly, homohexamer. Forms an RuvA(8)-RuvB(12)-Holliday junction (HJ) complex. HJ DNA is sandwiched between 2 RuvA tetramers; dsDNA enters through RuvA and exits via RuvB. An RuvB hexamer assembles on each DNA strand where it exits the tetramer. Each RuvB hexamer is contacted by two RuvA subunits (via domain III) on 2 adjacent RuvB subunits; this complex drives branch migration. In the full resolvosome a probable DNA-RuvA(4)-RuvB(12)-RuvC(2) complex forms which resolves the HJ.

The protein resides in the cytoplasm. The catalysed reaction is ATP + H2O = ADP + phosphate + H(+). The RuvA-RuvB-RuvC complex processes Holliday junction (HJ) DNA during genetic recombination and DNA repair, while the RuvA-RuvB complex plays an important role in the rescue of blocked DNA replication forks via replication fork reversal (RFR). RuvA specifically binds to HJ cruciform DNA, conferring on it an open structure. The RuvB hexamer acts as an ATP-dependent pump, pulling dsDNA into and through the RuvAB complex. RuvB forms 2 homohexamers on either side of HJ DNA bound by 1 or 2 RuvA tetramers; 4 subunits per hexamer contact DNA at a time. Coordinated motions by a converter formed by DNA-disengaged RuvB subunits stimulates ATP hydrolysis and nucleotide exchange. Immobilization of the converter enables RuvB to convert the ATP-contained energy into a lever motion, pulling 2 nucleotides of DNA out of the RuvA tetramer per ATP hydrolyzed, thus driving DNA branch migration. The RuvB motors rotate together with the DNA substrate, which together with the progressing nucleotide cycle form the mechanistic basis for DNA recombination by continuous HJ branch migration. Branch migration allows RuvC to scan DNA until it finds its consensus sequence, where it cleaves and resolves cruciform DNA. The sequence is that of Holliday junction branch migration complex subunit RuvB from Kosmotoga olearia (strain ATCC BAA-1733 / DSM 21960 / TBF 19.5.1).